Here is a 453-residue protein sequence, read N- to C-terminus: Alpha-2B adrenergic receptor (453 aa).

Residues 1 to 17 are Extracellular-facing; it reads MSGPAMVHQEPYSVQAT. Residues 18–42 traverse the membrane as a helical segment; it reads AAIASAITFLILFTIFGNALVILAV. At 43 to 54 the chain is on the cytoplasmic side; the sequence is LTSRSLRAPQNL. A helical transmembrane segment spans residues 55 to 80; it reads FLVSLAAADILVATLIIPFSLANELL. Residues 81-90 are Extracellular-facing; that stretch reads GYWYFWRAWC. A disulfide bridge links cysteine 90 with cysteine 169. A helical transmembrane segment spans residues 91–113; that stretch reads EVYLALDVLFCTSSIVHLCAISL. Residues 114–135 lie on the Cytoplasmic side of the membrane; that stretch reads DRYWAVSRALEYNSKRTPRRIK. A helical membrane pass occupies residues 136–158; that stretch reads CIILTVWLIAAVISLPPLIYKGD. At 159-174 the chain is on the extracellular side; the sequence is QRPEPHGLPQCELNQE. Residues 175-198 form a helical membrane-spanning segment; it reads AWYILASSIGSFFAPCLIMILVYL. Over 199–375 the chain is Cytoplasmic; sequence RIYVIAKRSH…LSREKRFTFV (177 aa). Residues 214-329 are disordered; sequence AKRGSGEGES…ASPASVFNPP (116 aa). Residues 303–314 are compositionally biased toward acidic residues; that stretch reads AEEDEEEVEECE. A helical transmembrane segment spans residues 376 to 399; it reads LAVVIGVFVVCWFPFFFSYSLGAI. Topologically, residues 400 to 408 are extracellular; that stretch reads CPQHCKVPH. The helical transmembrane segment at 409–432 threads the bilayer; that stretch reads GLFQFFFWIGYCNSSLNPVIYTIF. The Cytoplasmic segment spans residues 433 to 453; it reads NQDFRRAFRRILCRQWTQTGW. Cysteine 445 is lipidated: S-palmitoyl cysteine.

It belongs to the G-protein coupled receptor 1 family. Adrenergic receptor subfamily. ADRA2B sub-subfamily. Interacts with RAB26. Interacts with PPP1R9B. Interacts with GGA1, GGA2 and GGA3.

It localises to the cell membrane. Its function is as follows. Alpha-2 adrenergic receptors mediate the catecholamine-induced inhibition of adenylate cyclase through the action of G proteins. In Mus musculus (Mouse), this protein is Alpha-2B adrenergic receptor (Adra2b).